An 864-amino-acid polypeptide reads, in one-letter code: Leucine--tRNA ligase (864 aa).

Positions Pro-47–His-57 match the 'HIGH' region motif. The segment at Ser-298–Thr-317 is disordered. Residues Glu-299–Lys-309 show a composition bias toward basic and acidic residues. The 'KMSKS' region signature appears at Lys-622–Ser-626. ATP is bound at residue Lys-625.

The protein belongs to the class-I aminoacyl-tRNA synthetase family.

Its subcellular location is the cytoplasm. It catalyses the reaction tRNA(Leu) + L-leucine + ATP = L-leucyl-tRNA(Leu) + AMP + diphosphate. This chain is Leucine--tRNA ligase, found in Synechococcus sp. (strain RCC307).